Reading from the N-terminus, the 282-residue chain is MSHSNLLLGAHTSAAGGVYRALLEGKKIGATTIQFFTSNQKQWKGRQFTTNDIELWQSTLKETNLTHLMSHDSYLINLGCPNQENLLKSRQAFQEEVIRCTQLGINYLNFHPGASLGEDVQKCLDSIVESLLLVRPFIQGNLRLLLEATAGQGTSVGHKFEQLAYIINGVKDELPIGVCIDTCHIFVAGYDIRTSSAWDFTLKGFDRIIGLPYLYAFHINDSSKDLGSRVDRHQPLGEGKIGWESFEFLMKDSRTRHLPKYLETPGGVDLWEKEIQKLKEFA.

Zn(2+) is bound by residues His-71, His-111, Glu-147, Asp-181, His-184, His-218, Asp-231, His-233, and Glu-263.

Belongs to the AP endonuclease 2 family. The cofactor is Zn(2+).

The catalysed reaction is Endonucleolytic cleavage to 5'-phosphooligonucleotide end-products.. Endonuclease IV plays a role in DNA repair. It cleaves phosphodiester bonds at apurinic or apyrimidinic (AP) sites, generating a 3'-hydroxyl group and a 5'-terminal sugar phosphate. The sequence is that of Probable endonuclease 4 from Protochlamydia amoebophila (strain UWE25).